The primary structure comprises 402 residues: BTB and MATH domain-containing protein 40 (402 aa).

Residues 1-25 form a disordered region; sequence MSDRHLYGSDHSYLSSKPSCSSCRR. The span at 15–25 shows a compositional bias: low complexity; it reads SSKPSCSSCRR. The MATH domain occupies 43 to 177; it reads VLTQRWTVCN…DKSLVISCHI (135 aa). Residues 222-295 enclose the BTB domain; sequence TDMTIVAGPL…IYAGVIKSDI (74 aa).

In terms of assembly, interacts with cul-3.

It participates in protein modification; protein ubiquitination. Probable substrate-specific adapter of an E3 ubiquitin-protein ligase complex which mediates the ubiquitination and subsequent proteasomal degradation of target proteins. This chain is BTB and MATH domain-containing protein 40 (bath-40), found in Caenorhabditis elegans.